Here is a 198-residue protein sequence, read N- to C-terminus: MDFLNYPEPLADLITGLSRLPGIGPKTAGRLAFYLLQQPQVAENLAETMIRAQREIRQCSLCCNYTDHDPCPICTGEKRERTLLCIVEQPRDVVSLEKTREFKGLYHVLHGVISPLEGVGPEQLTISKLLGRLEGVQEVVMAMNPTVEGEATALYLSRLLKPLGIKVTRIAHGLPVGGDLEYADEITIARALEGRRQI.

The C4-type zinc-finger motif lies at 59-74 (CSLCCNYTDHDPCPIC). The region spanning 82–175 (TLLCIVEQPR…KVTRIAHGLP (94 aa)) is the Toprim domain.

This sequence belongs to the RecR family.

Its function is as follows. May play a role in DNA repair. It seems to be involved in an RecBC-independent recombinational process of DNA repair. It may act with RecF and RecO. The polypeptide is Recombination protein RecR (Desulfitobacterium hafniense (strain Y51)).